Consider the following 80-residue polypeptide: uncharacterized protein (80 aa).

It to M.leprae U650M.

This is an uncharacterized protein from Mycobacterium bovis (strain ATCC BAA-935 / AF2122/97).